Consider the following 128-residue polypeptide: Virion-associated protein (128 aa).

Coiled-coil stretches lie at residues 1–30 (MNLA…ILAK) and 37–58 (ESSN…EMKE). Residues 98–128 (FDVGNEGMGSSTNPNALKWPPTEKPQPWPPR) are disordered. Over residues 119 to 128 (TEKPQPWPPR) the composition is skewed to pro residues. A capsid binding region spans residues 122–128 (PQPWPPR).

Belongs to the caulimovirus ORF III family. As to quaternary structure, homotetramer, through coiled-coil domain. Homotrimer when interacts with icosehadral capsid. Interacts with capsid protein, and with Movement protein.

The protein localises to the virion. It is found in the host cell junction. The protein resides in the host plasmodesma. Plays a role in virus cell-to-cell and plant-to-plant transmission. Interacts with virion icosahedral capsid and movement protein, thereby facilitating virion cell-to-cell transmission through plasmodesmata opened by viral movement protein. Also interacts with aphid transmission factor, attaching the virion to aphid stylet when the animal feeds on an virus infected plant. Aphid saliva may later detach the virion, inducing release of infectious particles when the animal feeds on a new plant. The chain is Virion-associated protein from Carnation etched ring virus (CERV).